The chain runs to 195 residues: MKVTKDLVVSLAYQVRTEDGVLVDESPVSAPLDYLHGHGSLIAGLENALEGHEAGDSFDVRVNADEGYGSYDENLVQRVPKDVFMGVDELEVGMRFLADTDQGPVPVEITAVEDEHVVVDGNHMLAGQDLNFHVEVVAVREATEEELQHGHVHGEHDHHHEHGDGCCGGHGHDDHEHEHEHGKGGCGKSGGCGCH.

The segment at 1–69 (MKVTKDLVVS…VRVNADEGYG (69 aa)) is PPIase first part. The region spanning 6–95 (DLVVSLAYQV…GVDELEVGMR (90 aa)) is the PPIase FKBP-type domain. The interval 76-120 (VQRVPKDVFMGVDELEVGMRFLADTDQGPVPVEITAVEDEHVVVD) is IF-chaperone. The interval 129–151 (DLNFHVEVVAVREATEEELQHGH) is PPIase second part. The Ni(2+) site is built by cysteine 166, cysteine 167, cysteine 186, cysteine 192, and cysteine 194.

The protein belongs to the FKBP-type PPIase family.

The protein resides in the cytoplasm. It catalyses the reaction [protein]-peptidylproline (omega=180) = [protein]-peptidylproline (omega=0). In terms of biological role, folding helper with both chaperone and peptidyl-prolyl cis-trans isomerase (PPIase) activities. Chaperone activity prevents aggregation of unfolded or partially folded proteins and promotes their correct folding. PPIases catalyze the cis-trans isomerization of Xaa-Pro bonds of peptides, which accelerates slow steps of protein folding and thus shortens the lifetime of intermediates. Both strategies lower the concentration of intermediates and increase the productivity and yield of the folding reaction. Its function is as follows. Also involved in hydrogenase metallocenter assembly, probably by participating in the nickel insertion step. This function in hydrogenase biosynthesis requires chaperone activity and the presence of the metal-binding domain, but not PPIase activity. This is FKBP-type peptidyl-prolyl cis-trans isomerase SlyD (slyD) from Yersinia pestis.